The primary structure comprises 359 residues: Anhydro-N-acetylmuramic acid kinase (359 aa).

12–19 (GTSLDGVD) lines the ATP pocket.

The protein belongs to the anhydro-N-acetylmuramic acid kinase family.

The catalysed reaction is 1,6-anhydro-N-acetyl-beta-muramate + ATP + H2O = N-acetyl-D-muramate 6-phosphate + ADP + H(+). Its pathway is amino-sugar metabolism; 1,6-anhydro-N-acetylmuramate degradation. It participates in cell wall biogenesis; peptidoglycan recycling. Functionally, catalyzes the specific phosphorylation of 1,6-anhydro-N-acetylmuramic acid (anhMurNAc) with the simultaneous cleavage of the 1,6-anhydro ring, generating MurNAc-6-P. Is required for the utilization of anhMurNAc either imported from the medium or derived from its own cell wall murein, and thus plays a role in cell wall recycling. The polypeptide is Anhydro-N-acetylmuramic acid kinase (Sulfurovum sp. (strain NBC37-1)).